The primary structure comprises 1374 residues: Y' element ATP-dependent helicase YML133C (1374 aa).

In terms of domain architecture, Helicase ATP-binding spans 375–552; that stretch reads EIYMADTPSV…LQRIGLTGLA (178 aa). 388–395 contributes to the ATP binding site; sequence APPGYGKT. Positions 609 to 758 constitute a Helicase C-terminal domain; it reads KLLLALFEIE…EFYGLESKKG (150 aa). Low complexity predominate over residues 832–975; sequence ANASTNATTN…ATTTESTNAS (144 aa). The disordered stretch occupies residues 832-999; that stretch reads ANASTNATTN…RFHPVTDINK (168 aa). Residues 976–999 show a composition bias toward basic and acidic residues; sequence AKEDANKDGNAEDNRFHPVTDINK.

It belongs to the helicase family. Yeast subtelomeric Y' repeat subfamily.

Catalyzes DNA unwinding and is involved in telomerase-independent telomere maintenance. The sequence is that of Y' element ATP-dependent helicase YML133C from Saccharomyces cerevisiae (strain ATCC 204508 / S288c) (Baker's yeast).